The primary structure comprises 315 residues: tRNA pseudouridine synthase B (315 aa).

Position 42 (H42) interacts with substrate. Catalysis depends on D47, which acts as the Nucleophile. Substrate-binding residues include Y75, Y178, and L199.

It belongs to the pseudouridine synthase TruB family. Type 1 subfamily.

It catalyses the reaction uridine(55) in tRNA = pseudouridine(55) in tRNA. Functionally, responsible for synthesis of pseudouridine from uracil-55 in the psi GC loop of transfer RNAs. This is tRNA pseudouridine synthase B from Photorhabdus laumondii subsp. laumondii (strain DSM 15139 / CIP 105565 / TT01) (Photorhabdus luminescens subsp. laumondii).